A 318-amino-acid polypeptide reads, in one-letter code: Ribose-phosphate pyrophosphokinase (318 aa).

ATP contacts are provided by residues 43 to 45 (DGE) and 102 to 103 (RQ). Positions 136 and 176 each coordinate Mg(2+). K199 is a catalytic residue. D-ribose 5-phosphate is bound by residues R201, D225, and 229 to 233 (DTAGT).

This sequence belongs to the ribose-phosphate pyrophosphokinase family. Class I subfamily. As to quaternary structure, homohexamer. Mg(2+) is required as a cofactor.

The protein localises to the cytoplasm. The enzyme catalyses D-ribose 5-phosphate + ATP = 5-phospho-alpha-D-ribose 1-diphosphate + AMP + H(+). It functions in the pathway metabolic intermediate biosynthesis; 5-phospho-alpha-D-ribose 1-diphosphate biosynthesis; 5-phospho-alpha-D-ribose 1-diphosphate from D-ribose 5-phosphate (route I): step 1/1. Functionally, involved in the biosynthesis of the central metabolite phospho-alpha-D-ribosyl-1-pyrophosphate (PRPP) via the transfer of pyrophosphoryl group from ATP to 1-hydroxyl of ribose-5-phosphate (Rib-5-P). This chain is Ribose-phosphate pyrophosphokinase, found in Listeria ivanovii.